The sequence spans 164 residues: CB1 cannabinoid receptor-interacting protein 1 (164 aa).

Belongs to the CNRIP family. In terms of assembly, interacts with the cannabinoid receptor CNR1 (via C-terminus). Does not interact with cannabinoid receptor CNR2.

Functionally, suppresses cannabinoid receptor CNR1-mediated tonic inhibition of voltage-gated calcium channels. Its function is as follows. Does not suppress cannabinoid receptor CNR1-mediated tonic inhibition of voltage-gated calcium channels. In Homo sapiens (Human), this protein is CB1 cannabinoid receptor-interacting protein 1 (CNRIP1).